We begin with the raw amino-acid sequence, 82 residues long: Cytotoxin 6 (82 aa).

An N-terminal signal peptide occupies residues 1 to 21; it reads MKTLLLTLVVVTIVCLDLGYT. Intrachain disulfides connect Cys-24-Cys-42, Cys-35-Cys-59, Cys-63-Cys-74, and Cys-75-Cys-80.

It belongs to the three-finger toxin family. Short-chain subfamily. Type IA cytotoxin sub-subfamily. Monomer in solution; Homodimer and oligomer in the presence of negatively charged lipids forming a pore with a size ranging between 20 and 30 Angstroms. In terms of tissue distribution, expressed by the venom gland.

Its subcellular location is the secreted. The protein resides in the target cell membrane. Functionally, shows cytolytic activity on many different cells by forming pore in lipid membranes. In vivo, increases heart rate or kills the animal by cardiac arrest. In addition, it binds to heparin with high affinity, interacts with Kv channel-interacting protein 1 (KCNIP1) in a calcium-independent manner, and binds to integrin alpha-V/beta-3 (ITGAV/ITGB3) with moderate affinity. The sequence is that of Cytotoxin 6 from Naja atra (Chinese cobra).